The primary structure comprises 309 residues: Protein FdhE homolog (309 aa).

Belongs to the FdhE family.

It localises to the cytoplasm. Its function is as follows. Necessary for formate dehydrogenase activity. This Citrobacter koseri (strain ATCC BAA-895 / CDC 4225-83 / SGSC4696) protein is Protein FdhE homolog.